The following is a 133-amino-acid chain: Egg protein CP422 (133 aa).

Positions 1-21 are cleaved as a signal peptide; the sequence is MHECMIVFFIFAVVSIYYADA. 3 cysteine pairs are disulfide-bonded: cysteine 107-cysteine 121, cysteine 114-cysteine 125, and cysteine 120-cysteine 130.

The protein localises to the secreted. The chain is Egg protein CP422 (CP422) from Schistosoma japonicum (Blood fluke).